We begin with the raw amino-acid sequence, 407 residues long: Keratin, type I cuticular Ha2 (407 aa).

Residues 1 to 55 (MPSVCMPTTYRPASCLSKTYLSSSCQPSNRRPTGCISSSMGTYGLFCEGAFNGNE) are head. The IF rod domain maps to 55–366 (EKETMQVLND…GLLESEDSKL (312 aa)). The tract at residues 56 to 90 (KETMQVLNDRLANYLEKVRQLEKENAELEGKIQDV) is coil 1A. A linker 1 region spans residues 91–101 (YQGQVLTMCPD). The tract at residues 102–202 (YQSYFQTIEE…HEEEVGVLRQ (101 aa)) is coil 1B. The interval 203–218 (QLGDRLNIEVDAAPPV) is linker 12. Positions 219–362 (DLTRMLEEMR…DTYRGLLESE (144 aa)) are coil 2. The segment at 363–407 (DSKLPCNPCSTPSCQPCAPSPGVSRTVCVPHTVCVPCSPCLQTRY) is tail.

It belongs to the intermediate filament family. As to expression, cuticle of the hair shaft.

The polypeptide is Keratin, type I cuticular Ha2 (Krt32) (Mus musculus (Mouse)).